Consider the following 671-residue polypeptide: Putative protein kinase C delta type homolog (671 aa).

A disordered region spans residues 1 to 136 (MMFTRAQVRK…ITNRRGAIKH (136 aa)). A compositionally biased stretch (low complexity) spans 14-27 (SNSSSQRPRSSGGS). Basic and acidic residues predominate over residues 57 to 101 (ARRDQYRDRDHYGKHSFELPRQHSKEEAYHRDRESSAGGVDRGER). The span at 102-116 (SGIGGNGGGVTGGGV) shows a compositional bias: gly residues. 2 consecutive Phorbol-ester/DAG-type zinc fingers follow at residues 144 to 194 (GHRF…LGKC) and 216 to 266 (PHRF…ANLC). Residues 343–601 (FHFLAVLGKG…AGDIADHIFF (259 aa)) enclose the Protein kinase domain. ATP is bound by residues 349–357 (LGKGSFGKV) and lysine 372. Aspartate 467 (proton acceptor) is an active-site residue. One can recognise an AGC-kinase C-terminal domain in the interval 602–671 (RPIDWGLLEK…TYTNPHITLD (70 aa)).

Belongs to the protein kinase superfamily. AGC Ser/Thr protein kinase family. PKC subfamily.

It catalyses the reaction L-seryl-[protein] + ATP = O-phospho-L-seryl-[protein] + ADP + H(+). The enzyme catalyses L-threonyl-[protein] + ATP = O-phospho-L-threonyl-[protein] + ADP + H(+). The protein is Putative protein kinase C delta type homolog of Drosophila melanogaster (Fruit fly).